We begin with the raw amino-acid sequence, 315 residues long: Glycerol-3-phosphate dehydrogenase [NAD(P)+] (315 aa).

Residues W24, R44, R45, and K92 each contribute to the NADPH site. 2 residues coordinate sn-glycerol 3-phosphate: K92 and G120. An NADPH-binding site is contributed by S124. Positions 175, 228, 238, 239, and 240 each coordinate sn-glycerol 3-phosphate. The Proton acceptor role is filled by K175. Position 239 (R239) interacts with NADPH. E265 contributes to the NADPH binding site.

It belongs to the NAD-dependent glycerol-3-phosphate dehydrogenase family.

The protein resides in the cytoplasm. The catalysed reaction is sn-glycerol 3-phosphate + NAD(+) = dihydroxyacetone phosphate + NADH + H(+). It carries out the reaction sn-glycerol 3-phosphate + NADP(+) = dihydroxyacetone phosphate + NADPH + H(+). It functions in the pathway membrane lipid metabolism; glycerophospholipid metabolism. Functionally, catalyzes the reduction of the glycolytic intermediate dihydroxyacetone phosphate (DHAP) to sn-glycerol 3-phosphate (G3P), the key precursor for phospholipid synthesis. This chain is Glycerol-3-phosphate dehydrogenase [NAD(P)+], found in Synechococcus sp. (strain JA-2-3B'a(2-13)) (Cyanobacteria bacterium Yellowstone B-Prime).